The chain runs to 242 residues: Biosynthetic peptidoglycan transglycosylase (242 aa).

Residues 19–39 traverse the membrane as a helical segment; it reads ILAALAVFWGGGIALFSVVPV.

The protein belongs to the glycosyltransferase 51 family.

The protein localises to the cell inner membrane. It carries out the reaction [GlcNAc-(1-&gt;4)-Mur2Ac(oyl-L-Ala-gamma-D-Glu-L-Lys-D-Ala-D-Ala)](n)-di-trans,octa-cis-undecaprenyl diphosphate + beta-D-GlcNAc-(1-&gt;4)-Mur2Ac(oyl-L-Ala-gamma-D-Glu-L-Lys-D-Ala-D-Ala)-di-trans,octa-cis-undecaprenyl diphosphate = [GlcNAc-(1-&gt;4)-Mur2Ac(oyl-L-Ala-gamma-D-Glu-L-Lys-D-Ala-D-Ala)](n+1)-di-trans,octa-cis-undecaprenyl diphosphate + di-trans,octa-cis-undecaprenyl diphosphate + H(+). It functions in the pathway cell wall biogenesis; peptidoglycan biosynthesis. Its function is as follows. Peptidoglycan polymerase that catalyzes glycan chain elongation from lipid-linked precursors. This is Biosynthetic peptidoglycan transglycosylase from Salmonella agona (strain SL483).